Consider the following 461-residue polypeptide: V-type ATP synthase beta chain (461 aa).

It belongs to the ATPase alpha/beta chains family.

Produces ATP from ADP in the presence of a proton gradient across the membrane. The V-type beta chain is a regulatory subunit. This Clostridium botulinum (strain 657 / Type Ba4) protein is V-type ATP synthase beta chain.